Reading from the N-terminus, the 118-residue chain is Putative pterin-4-alpha-carbinolamine dehydratase (118 aa).

Belongs to the pterin-4-alpha-carbinolamine dehydratase family.

It catalyses the reaction (4aS,6R)-4a-hydroxy-L-erythro-5,6,7,8-tetrahydrobiopterin = (6R)-L-erythro-6,7-dihydrobiopterin + H2O. This is Putative pterin-4-alpha-carbinolamine dehydratase from Xanthomonas campestris pv. campestris (strain B100).